A 475-amino-acid polypeptide reads, in one-letter code: ISWI one complex protein 4 (475 aa).

Position 2 is a phosphoserine (S2). Position 9 is a phosphothreonine (T9). 3 disordered regions span residues 42-84, 181-296, and 454-475; these read VSVH…DFGE, EEEY…IKYH, and EMDREKPSFSEDVKEEESKVGA. A phosphoserine mark is found at S65 and S73. Composition is skewed to acidic residues over residues 72 to 84, 181 to 193, and 241 to 252; these read QSEEEEDIEDFGE, EEEYVEEEEEENE, and ASEEEEEEEEEK. Position 242 is a phosphoserine (S242). Positions 259 to 294 are enriched in basic residues; that stretch reads KRPQRTKTKKVVVSKTKPNPKTKAKKEKPKPPKPIK. Residues 456-475 show a composition bias toward basic and acidic residues; that stretch reads DREKPSFSEDVKEEESKVGA.

As to quaternary structure, component of the ISW1B complex, which at least consists of ISW1, IOC2 and IOC4.

The protein localises to the nucleus. In terms of biological role, functions as a component of the ISW1B complex, which acts in remodeling the chromatin by catalyzing an ATP-dependent alteration in the structure of nucleosomal DNA. The ISW1B complex acts within coding regions to control the amount of RNA polymerase II released into productive elongation and to coordinate elongation with termination and pre-mRNA processing. This is ISWI one complex protein 4 (IOC4) from Saccharomyces cerevisiae (strain ATCC 204508 / S288c) (Baker's yeast).